Consider the following 340-residue polypeptide: Phenylalanine--tRNA ligase alpha subunit (340 aa).

Glu258 provides a ligand contact to Mg(2+).

Belongs to the class-II aminoacyl-tRNA synthetase family. Phe-tRNA synthetase alpha subunit type 1 subfamily. In terms of assembly, tetramer of two alpha and two beta subunits. Mg(2+) serves as cofactor.

It is found in the cytoplasm. The enzyme catalyses tRNA(Phe) + L-phenylalanine + ATP = L-phenylalanyl-tRNA(Phe) + AMP + diphosphate + H(+). The chain is Phenylalanine--tRNA ligase alpha subunit from Corynebacterium glutamicum (strain ATCC 13032 / DSM 20300 / JCM 1318 / BCRC 11384 / CCUG 27702 / LMG 3730 / NBRC 12168 / NCIMB 10025 / NRRL B-2784 / 534).